The sequence spans 232 residues: Large ribosomal subunit protein uL1 (232 aa).

The protein belongs to the universal ribosomal protein uL1 family. As to quaternary structure, part of the 50S ribosomal subunit.

Its function is as follows. Binds directly to 23S rRNA. The L1 stalk is quite mobile in the ribosome, and is involved in E site tRNA release. Protein L1 is also a translational repressor protein, it controls the translation of the L11 operon by binding to its mRNA. This chain is Large ribosomal subunit protein uL1, found in Paraburkholderia phytofirmans (strain DSM 17436 / LMG 22146 / PsJN) (Burkholderia phytofirmans).